Consider the following 285-residue polypeptide: CBY1-interacting BAR domain-containing protein 1-B (285 aa).

Residues 1–48 (MSQTPEARTRDNQTRQIQESVNNVEKHFGELCQIFAGYVRKTARLRDK) constitute a mitochondrion transit peptide. The tract at residues 11–221 (DNQTRQIQES…DIDEEEDLEV (211 aa)) is BAR-like. Residues 142 to 184 (RQIISQAETELQRATMDAARISQQLEETIDNFEKQKIKDIKKL) adopt a coiled-coil conformation. Residues 241 to 261 (NSRSGSTSRAPSVISQPPGNR) show a composition bias toward polar residues. The segment at 241–285 (NSRSGSTSRAPSVISQPPGNRQKNRMEDDEDGEDDNDENSTEDEN) is disordered. The span at 267-285 (EDDEDGEDDNDENSTEDEN) shows a compositional bias: acidic residues.

The protein belongs to the CIBAR family.

Its subcellular location is the cytoplasm. It localises to the cytoskeleton. The protein resides in the microtubule organizing center. The protein localises to the centrosome. It is found in the centriole. Its subcellular location is the cell projection. It localises to the cilium. The protein resides in the nucleus. The protein localises to the mitochondrion inner membrane. It is found in the flagellum. In terms of biological role, plays a critical role in regulating mitochondrial ultrastructure and function by maintaining the integrity of mitochondrial morphology, particularly the organization of cristae. Plays a crucial role in ciliogenesis. Plays a key role in the correct positioning of the annulus, a septin-based ring structure in the sperm flagellum, serving both as a physical barrier and a membrane diffusion barrier that separates the midpiece (MP) from the principal piece (PP). This is CBY1-interacting BAR domain-containing protein 1-B from Xenopus laevis (African clawed frog).